We begin with the raw amino-acid sequence, 121 residues long: Large ribosomal subunit protein bL12 (121 aa).

The protein belongs to the bacterial ribosomal protein bL12 family. As to quaternary structure, homodimer. Part of the ribosomal stalk of the 50S ribosomal subunit. Forms a multimeric L10(L12)X complex, where L10 forms an elongated spine to which 2 to 4 L12 dimers bind in a sequential fashion. Binds GTP-bound translation factors.

Forms part of the ribosomal stalk which helps the ribosome interact with GTP-bound translation factors. Is thus essential for accurate translation. The protein is Large ribosomal subunit protein bL12 of Halalkalibacterium halodurans (strain ATCC BAA-125 / DSM 18197 / FERM 7344 / JCM 9153 / C-125) (Bacillus halodurans).